A 128-amino-acid polypeptide reads, in one-letter code: Transmembrane protein 234 homolog (128 aa).

The next 4 helical transmembrane spans lie at 3-23 (TYNI…NPLI), 53-73 (PSYT…FYTL), 80-100 (LVVP…GMLL), and 104-124 (VLHF…TICV).

It belongs to the TMEM234 family.

Its subcellular location is the membrane. This Dictyostelium discoideum (Social amoeba) protein is Transmembrane protein 234 homolog.